Consider the following 197-residue polypeptide: Small ribosomal subunit protein uS5 (197 aa).

Residues 1 to 17 (MAERENRGRGRGRNREE) show a composition bias toward basic and acidic residues. Disordered regions lie at residues 1-22 (MAER…TPEF) and 158-197 (NESS…SEEA). The S5 DRBM domain maps to 22–85 (FADRLVAINR…EQAKRQLIRV (64 aa)). The segment covering 172-186 (KVADILPKRDDHPQI) has biased composition (basic and acidic residues).

It belongs to the universal ribosomal protein uS5 family. As to quaternary structure, part of the 30S ribosomal subunit. Contacts proteins S4 and S8.

Functionally, with S4 and S12 plays an important role in translational accuracy. Located at the back of the 30S subunit body where it stabilizes the conformation of the head with respect to the body. The protein is Small ribosomal subunit protein uS5 of Jannaschia sp. (strain CCS1).